We begin with the raw amino-acid sequence, 1662 residues long: ABC transporter A family member 5 (1662 aa).

7 helical membrane-spanning segments follow: residues I30–F50, S242–V262, I284–I304, I317–F337, F346–G366, L377–I397, and Q417–D437. Positions I505 to S739 constitute an ABC transporter 1 domain. G541–S548 lines the ATP pocket. 7 helical membrane-spanning segments follow: residues F872–V892, I1052–G1072, L1102–V1122, F1130–L1150, G1163–L1183, I1201–I1221, and S1246–I1266. The region spanning L1322–K1557 is the ABC transporter 2 domain. G1360–T1367 contacts ATP.

Belongs to the ABC transporter superfamily. ABCA family.

The protein resides in the membrane. The polypeptide is ABC transporter A family member 5 (abcA5) (Dictyostelium discoideum (Social amoeba)).